The primary structure comprises 334 residues: L-lactate dehydrogenase C chain (334 aa).

Residues 30-58 (GQVG…LEDK), Arg-100, and Asn-139 each bind NAD(+). Asn-139 and Arg-170 together coordinate substrate. His-194 (proton acceptor) is an active-site residue. Position 249 (Thr-249) interacts with substrate.

This sequence belongs to the LDH/MDH superfamily. LDH family. As to quaternary structure, homotetramer.

It is found in the cytoplasm. The enzyme catalyses (S)-lactate + NAD(+) = pyruvate + NADH + H(+). It participates in fermentation; pyruvate fermentation to lactate; (S)-lactate from pyruvate: step 1/1. This chain is L-lactate dehydrogenase C chain (ldhc), found in Xenopus laevis (African clawed frog).